A 283-amino-acid polypeptide reads, in one-letter code: Diaminopimelate epimerase (283 aa).

Substrate-binding residues include Asn-13 and Asn-66. The Proton donor role is filled by Cys-75. Residues 76–77 (GN), Asn-165, Asn-198, and 216–217 (ER) contribute to the substrate site. Cys-225 acts as the Proton acceptor in catalysis. 226 to 227 (GT) is a substrate binding site.

The protein belongs to the diaminopimelate epimerase family. Homodimer.

It localises to the cytoplasm. The catalysed reaction is (2S,6S)-2,6-diaminopimelate = meso-2,6-diaminopimelate. Its pathway is amino-acid biosynthesis; L-lysine biosynthesis via DAP pathway; DL-2,6-diaminopimelate from LL-2,6-diaminopimelate: step 1/1. In terms of biological role, catalyzes the stereoinversion of LL-2,6-diaminopimelate (L,L-DAP) to meso-diaminopimelate (meso-DAP), a precursor of L-lysine and an essential component of the bacterial peptidoglycan. This Acaryochloris marina (strain MBIC 11017) protein is Diaminopimelate epimerase.